Here is a 431-residue protein sequence, read N- to C-terminus: Histidine--tRNA ligase (431 aa).

It belongs to the class-II aminoacyl-tRNA synthetase family. In terms of assembly, homodimer.

It localises to the cytoplasm. It carries out the reaction tRNA(His) + L-histidine + ATP = L-histidyl-tRNA(His) + AMP + diphosphate + H(+). This Leifsonia xyli subsp. xyli (strain CTCB07) protein is Histidine--tRNA ligase (hisS).